Reading from the N-terminus, the 260-residue chain is NH(3)-dependent NAD(+) synthetase (260 aa).

31-38 contributes to the ATP binding site; it reads GLSGGLDS. A Mg(2+)-binding site is contributed by D37. Position 112 (R112) interacts with deamido-NAD(+). An ATP-binding site is contributed by T132. E137 serves as a coordination point for Mg(2+). The ATP site is built by K161 and S183.

The protein belongs to the NAD synthetase family. Homodimer.

It carries out the reaction deamido-NAD(+) + NH4(+) + ATP = AMP + diphosphate + NAD(+) + H(+). Its pathway is cofactor biosynthesis; NAD(+) biosynthesis; NAD(+) from deamido-NAD(+) (ammonia route): step 1/1. Its function is as follows. Catalyzes the ATP-dependent amidation of deamido-NAD to form NAD. Uses ammonia as a nitrogen source. The polypeptide is NH(3)-dependent NAD(+) synthetase (Helicobacter pylori (strain HPAG1)).